We begin with the raw amino-acid sequence, 352 residues long: Protein RecA (352 aa).

65 to 72 (GPESSGKT) is an ATP binding site.

Belongs to the RecA family.

The protein localises to the cytoplasm. Can catalyze the hydrolysis of ATP in the presence of single-stranded DNA, the ATP-dependent uptake of single-stranded DNA by duplex DNA, and the ATP-dependent hybridization of homologous single-stranded DNAs. It interacts with LexA causing its activation and leading to its autocatalytic cleavage. Plays a functional role in the DNA rearrangement associated with the phenotypic switching from a pathogenic smooth to a nonpathogenic rough form in this bacterium. The polypeptide is Protein RecA (Pseudomonas tolaasii).